A 348-amino-acid chain; its full sequence is MTLTKQDAVNQMMGFFQSKTLITALSLKLFDHLRDQDRNAKQMAALLNCPLRSSEQLLIALQAMGYLEKQDGLYHLPQEHRAFLVSDEPQWLGWLGRHIDTFLYPLWGELKAAVENDTHQRQTVFGDDRSWFDILYQNPDDVTDFQEFLGKFAAPFIDGFIQDYDFSQHQAFLDIGSGIGSLPIAVANAYSGVNLAICELPQTSTFLRDKLVQQGYGQRIQVLEGDVISGDLPIGDYDLIHLGWMLHDYAPETQLIILKNIYDAMPVGGRFIASETPLNADKSGPEFTALLSLNMLVSTDGGIESSPQEYLSRFHQAGFSNARIMDISGPRTLIVGEKTTHNNGSSQC.

Glu-199 is a binding site for S-adenosyl-L-methionine. His-247 acts as the Proton acceptor in catalysis.

It belongs to the class I-like SAM-binding methyltransferase superfamily. Cation-independent O-methyltransferase family.

It participates in antibiotic biosynthesis; prodigiosin biosynthesis. Functionally, involved in the biosynthesis of 4-methoxy-2,2'-bipyrrole-5-carbaldehyde (MBC), one of the terminal products involved in the biosynthesis of the red antibiotic prodigiosin (Pig). Catalyzes the transfer of a methyl group from S-adenosyl-L-methionine (SAM) to the hydroxyl group of 4-hydroxy-2,2'-bipyrrole-5-carbaldehyde (HBC) to yield 4-methoxy-2,2'-bipyrrole-5-carbaldehyde (MBC). This Serratia sp. (strain ATCC 39006) (Prodigiosinella confusarubida) protein is S-adenosyl-L-methionine-dependent methyl transferase PigF.